A 122-amino-acid polypeptide reads, in one-letter code: Large ribosomal subunit protein uL14c (122 aa).

The protein belongs to the universal ribosomal protein uL14 family. In terms of assembly, part of the 50S ribosomal subunit.

The protein localises to the plastid. The protein resides in the chloroplast. Functionally, binds to 23S rRNA. The polypeptide is Large ribosomal subunit protein uL14c (Lactuca sativa (Garden lettuce)).